Consider the following 373-residue polypeptide: Flagellar P-ring protein (373 aa).

Residues 1–27 (MPSFSPTLLKLAAAALSALLLSGVAAS) form the signal peptide.

This sequence belongs to the FlgI family. In terms of assembly, the basal body constitutes a major portion of the flagellar organelle and consists of four rings (L,P,S, and M) mounted on a central rod.

The protein resides in the periplasm. The protein localises to the bacterial flagellum basal body. Its function is as follows. Assembles around the rod to form the L-ring and probably protects the motor/basal body from shearing forces during rotation. This chain is Flagellar P-ring protein, found in Rhodopseudomonas palustris (strain BisB5).